A 92-amino-acid chain; its full sequence is Toxin RelE3 (92 aa).

The protein belongs to the RelE toxin family.

Toxic component of a type II toxin-antitoxin (TA) system. Its toxic effect is neutralized by coexpression with cognate antitoxin RelB3 but no other ParD or RelB antitoxin. This Caulobacter vibrioides (strain ATCC 19089 / CIP 103742 / CB 15) (Caulobacter crescentus) protein is Toxin RelE3 (relE3).